Reading from the N-terminus, the 31-residue chain is Cliotide T10 (31 aa).

The cyclopeptide (Gly-Asn) cross-link spans 1-31; that stretch reads GIPCGESCVYIPCTVTALLGCSCKDKVCYKN. 3 cysteine pairs are disulfide-bonded: C4-C21, C8-C23, and C13-C28.

Post-translationally, contains 3 disulfide bonds. In terms of processing, this is a cyclic peptide. In terms of tissue distribution, expressed in seed, root and nodule but not in flower, stem, shoot, leaf and pod (at protein level).

Its function is as follows. Probably participates in a plant defense mechanism. This is Cliotide T10 from Clitoria ternatea (Butterfly pea).